The chain runs to 541 residues: Sialate O-acetylesterase (541 aa).

A signal peptide spans 1–23 (MVSPGPVFGIVLLIIARVSRSAG). 8 N-linked (GlcNAc...) asparagine glycosylation sites follow: Asn107, Asn138, Asn188, Asn293, Asn356, Asn427, Asn448, and Asn462.

Disulfide-linked heterodimer of a small subunit and a large subunit. In terms of processing, the two subunits are derived from a single precursor by proteolytic cleavage. The lysosomal isoform is glycosylated. As to expression, highly expressed in liver, testis, and kidney, whereas skeletal muscle, adipose tissue, and heart have lower levels. Highest expression in brain and ovary and lower levels in liver and thymus.

It localises to the lysosome. The protein resides in the cytoplasm. The enzyme catalyses N-acetyl-9-O-acetylneuraminate + H2O = N-acetylneuraminate + acetate + H(+). It catalyses the reaction an Ac-O-9-sialoglycoconjugate + H2O = a sialoglycoconjugate + acetate + H(+). With respect to regulation, inhibited by diisopropyl fluorophosphate and diethyl-P-nitrophenyl phosphate. Its function is as follows. Catalyzes the removal of O-acetyl ester groups from position 9 of the free diacetylated sialate N-acetyl-9-O-acetylneuraminate (Neu5,9Ac2) in the cytosol and of the diacetylated sialate residues of sialylglycoconjugates in the lysosomes. Together with the sialate-O-acetyltransferase they regulate the balance of acetylated sialoglycoconjugates, key players in various processes such as cell-cell interactions, host-pathogen recognition, and tumor antigenicity. The sequence is that of Sialate O-acetylesterase (Siae) from Mus musculus (Mouse).